The chain runs to 138 residues: Acidic phospholipase A2 homolog sistruxin A (138 aa).

The N-terminal stretch at 1-37 (MRALWIVAVLLLGVEGSLVEFETLIMKIAGRSGVWYY) is a signal peptide. 7 cysteine pairs are disulfide-bonded: cysteine 42/cysteine 131, cysteine 44/cysteine 60, cysteine 59/cysteine 111, cysteine 65/cysteine 138, cysteine 66/cysteine 104, cysteine 73/cysteine 97, and cysteine 91/cysteine 102. A propeptide spanning residues 78-83 (DVYTYR) is cleaved from the precursor. Glutamine 84 is subject to Pyrrolidone carboxylic acid. Positions 119–124 (YNHKYW) are excised as a propeptide.

Belongs to the phospholipase A2 family. Group II subfamily. D49 sub-subfamily. As to quaternary structure, heterodimer of an acidic subunit and a basic chain. The acidic subunit is non-toxic, without enzymatic activity and comprises 3 peptides that are cross-linked by 7 disulfide bridges. The basic subunit is toxic, has phospholipase A2 activity and is composed of a single chain. As to expression, expressed by the venom gland.

The protein localises to the secreted. Its function is as follows. Snake venom phospholipase A2 (PLA2) that inhibits neuromuscular transmission by blocking acetylcholine release from the nerve termini. This chain is Acidic phospholipase A2 homolog sistruxin A, found in Sistrurus tergeminus (Western massasauga).